Consider the following 154-residue polypeptide: MKTFTATPADIEKKWILIDAEGVVLGRLATIVANILRGKNKPTFTPHMDMGDNVIVINADKVQMTGNKRADKRYYWHTGHPGGVKFRTAEQVLEGAHPERVVLKAVERMISRNSLGRQQMTNLRVYAGAEHPHEAQQPTVLDVKSLNPKNTRSA.

This sequence belongs to the universal ribosomal protein uL13 family. In terms of assembly, part of the 50S ribosomal subunit.

Its function is as follows. This protein is one of the early assembly proteins of the 50S ribosomal subunit, although it is not seen to bind rRNA by itself. It is important during the early stages of 50S assembly. The sequence is that of Large ribosomal subunit protein uL13 from Cereibacter sphaeroides (strain ATCC 17029 / ATH 2.4.9) (Rhodobacter sphaeroides).